Reading from the N-terminus, the 218-residue chain is Thiamine-phosphate synthase (218 aa).

Residues 43 to 47 (QLRDK) and Asn-75 each bind 4-amino-2-methyl-5-(diphosphooxymethyl)pyrimidine. Residues Asp-76 and Asp-95 each contribute to the Mg(2+) site. Ser-114 is a binding site for 4-amino-2-methyl-5-(diphosphooxymethyl)pyrimidine. 141 to 143 (TPT) lines the 2-[(2R,5Z)-2-carboxy-4-methylthiazol-5(2H)-ylidene]ethyl phosphate pocket. Lys-144 is a binding site for 4-amino-2-methyl-5-(diphosphooxymethyl)pyrimidine. Position 172 (Gly-172) interacts with 2-[(2R,5Z)-2-carboxy-4-methylthiazol-5(2H)-ylidene]ethyl phosphate.

This sequence belongs to the thiamine-phosphate synthase family. Requires Mg(2+) as cofactor.

It catalyses the reaction 2-[(2R,5Z)-2-carboxy-4-methylthiazol-5(2H)-ylidene]ethyl phosphate + 4-amino-2-methyl-5-(diphosphooxymethyl)pyrimidine + 2 H(+) = thiamine phosphate + CO2 + diphosphate. The catalysed reaction is 2-(2-carboxy-4-methylthiazol-5-yl)ethyl phosphate + 4-amino-2-methyl-5-(diphosphooxymethyl)pyrimidine + 2 H(+) = thiamine phosphate + CO2 + diphosphate. The enzyme catalyses 4-methyl-5-(2-phosphooxyethyl)-thiazole + 4-amino-2-methyl-5-(diphosphooxymethyl)pyrimidine + H(+) = thiamine phosphate + diphosphate. Its pathway is cofactor biosynthesis; thiamine diphosphate biosynthesis; thiamine phosphate from 4-amino-2-methyl-5-diphosphomethylpyrimidine and 4-methyl-5-(2-phosphoethyl)-thiazole: step 1/1. Functionally, condenses 4-methyl-5-(beta-hydroxyethyl)thiazole monophosphate (THZ-P) and 2-methyl-4-amino-5-hydroxymethyl pyrimidine pyrophosphate (HMP-PP) to form thiamine monophosphate (TMP). The polypeptide is Thiamine-phosphate synthase (Thermobifida fusca (strain YX)).